The chain runs to 434 residues: Tol-Pal system protein TolB (434 aa).

The first 21 residues, 1–21 (MIVRRALALAALALAASPALA), serve as a signal peptide directing secretion. The interval 411–434 (GDRQTPVTSGKTDLAAPAWGPLAP) is disordered.

Belongs to the TolB family. The Tol-Pal system is composed of five core proteins: the inner membrane proteins TolA, TolQ and TolR, the periplasmic protein TolB and the outer membrane protein Pal. They form a network linking the inner and outer membranes and the peptidoglycan layer.

Its subcellular location is the periplasm. Functionally, part of the Tol-Pal system, which plays a role in outer membrane invagination during cell division and is important for maintaining outer membrane integrity. This Anaeromyxobacter sp. (strain K) protein is Tol-Pal system protein TolB.